The primary structure comprises 853 residues: uncharacterized protein (853 aa).

Coiled-coil stretches lie at residues 313 to 343 (RTDE…LKVA) and 480 to 528 (EGQV…SELI).

This is an uncharacterized protein from Ostreid herpesvirus 1 (isolate France) (OsHV-1).